A 345-amino-acid chain; its full sequence is tRNA pseudouridine synthase B (345 aa).

Residue Asp39 is the Nucleophile of the active site.

It belongs to the pseudouridine synthase TruB family. Type 1 subfamily.

It carries out the reaction uridine(55) in tRNA = pseudouridine(55) in tRNA. Its function is as follows. Responsible for synthesis of pseudouridine from uracil-55 in the psi GC loop of transfer RNAs. The protein is tRNA pseudouridine synthase B of Rickettsia rickettsii (strain Iowa).